Reading from the N-terminus, the 84-residue chain is Large ribosomal subunit protein bL27 (84 aa).

Positions 1–25 (MAHKKGAGSTKNGRDSKPKMLGVKR) are disordered.

This sequence belongs to the bacterial ribosomal protein bL27 family.

This Dehalococcoides mccartyi (strain ATCC BAA-2266 / KCTC 15142 / 195) (Dehalococcoides ethenogenes (strain 195)) protein is Large ribosomal subunit protein bL27.